The following is a 91-amino-acid chain: DNA-directed RNA polymerase subunit omega (91 aa).

It belongs to the RNA polymerase subunit omega family. The RNAP catalytic core consists of 2 alpha, 1 beta, 1 beta' and 1 omega subunit. When a sigma factor is associated with the core the holoenzyme is formed, which can initiate transcription.

It carries out the reaction RNA(n) + a ribonucleoside 5'-triphosphate = RNA(n+1) + diphosphate. Promotes RNA polymerase assembly. Latches the N- and C-terminal regions of the beta' subunit thereby facilitating its interaction with the beta and alpha subunits. The protein is DNA-directed RNA polymerase subunit omega of Photorhabdus laumondii subsp. laumondii (strain DSM 15139 / CIP 105565 / TT01) (Photorhabdus luminescens subsp. laumondii).